A 173-amino-acid chain; its full sequence is Crossover junction endodeoxyribonuclease RuvC (173 aa).

Active-site residues include Asp-11, Glu-71, and Asp-143. Mg(2+) is bound by residues Asp-11, Glu-71, and Asp-143.

The protein belongs to the RuvC family. Homodimer which binds Holliday junction (HJ) DNA. The HJ becomes 2-fold symmetrical on binding to RuvC with unstacked arms; it has a different conformation from HJ DNA in complex with RuvA. In the full resolvosome a probable DNA-RuvA(4)-RuvB(12)-RuvC(2) complex forms which resolves the HJ. Mg(2+) serves as cofactor.

Its subcellular location is the cytoplasm. The catalysed reaction is Endonucleolytic cleavage at a junction such as a reciprocal single-stranded crossover between two homologous DNA duplexes (Holliday junction).. In terms of biological role, the RuvA-RuvB-RuvC complex processes Holliday junction (HJ) DNA during genetic recombination and DNA repair. Endonuclease that resolves HJ intermediates. Cleaves cruciform DNA by making single-stranded nicks across the HJ at symmetrical positions within the homologous arms, yielding a 5'-phosphate and a 3'-hydroxyl group; requires a central core of homology in the junction. The consensus cleavage sequence is 5'-(A/T)TT(C/G)-3'. Cleavage occurs on the 3'-side of the TT dinucleotide at the point of strand exchange. HJ branch migration catalyzed by RuvA-RuvB allows RuvC to scan DNA until it finds its consensus sequence, where it cleaves and resolves the cruciform DNA. The sequence is that of Crossover junction endodeoxyribonuclease RuvC from Brucella suis biovar 1 (strain 1330).